The chain runs to 173 residues: Translation initiation factor IF-3 (173 aa).

The protein belongs to the IF-3 family. Monomer.

The protein localises to the cytoplasm. Its function is as follows. IF-3 binds to the 30S ribosomal subunit and shifts the equilibrium between 70S ribosomes and their 50S and 30S subunits in favor of the free subunits, thus enhancing the availability of 30S subunits on which protein synthesis initiation begins. This is Translation initiation factor IF-3 from Methylorubrum extorquens (strain CM4 / NCIMB 13688) (Methylobacterium extorquens).